Here is a 220-residue protein sequence, read N- to C-terminus: Nucleolar protein 3 (220 aa).

The N-myristoyl glycine moiety is linked to residue glycine 2. One can recognise a CARD domain in the interval 4–95 (VQERPSETID…MPDPAWDWQH (92 aa)). Positions 20-70 (VETLQADSGLLLDALVARGVLTGPEYEALDALPDAERRVRRLLLLVQSKGE) are essential for interaction with BAX. Positions 111-220 (GHWTPEAPSS…FQEEDESEDS (110 aa)) are disordered. At threonine 149 the chain carries Phosphothreonine; by CK2. Residues 152–220 (EPELEAEATE…FQEEDESEDS (69 aa)) show a composition bias toward acidic residues.

As to quaternary structure, oligomerizes (via CARD doamin). Interacts (via CARD domain) with CASP2; inhibits CASP2 activity in a phosphorylation-dependent manner. Interacts with CASP8; decreases CASP8 activity in a mitochondria localization- and phosphorylation-dependent manner and this interaction is dissociated by calcium. Interacts with TFPT; translocates NOL3 into the nucleus and negatively regulated TFPT-induced cell death. Interacts directly (via CARD domain) with FAS and FADD (via DED domain); inhibits death-inducing signaling complex (DISC) assembly by inhibiting the increase in FAS-FADD binding induced by FAS activation. Interacts (via CARD domain) with BAX (via a C-terminal 33 residues); inhibits BAX activation and translocation and consequently cytochrome c release from mitochondria. Interacts with PPM1G; may dephosphorylate NOL3. Interacts (via CARD domain) with BBC3 (via BH3 domain); preventing the association of BBC3 with BCL2 and resulting in activation of CASP8. Interacts (via CARD domain) with BAD(via BH3 domain); preventing the association of BAD with BCL2. Interacts directly (via CARD domain) with TNFRSF1A; inhibits TNF-signaling pathway. Post-translationally, phosphorylation at Thr-149 is required for its antiapoptotic effect by blocking death-inducing signaling complex death-inducing signaling complex (DISC) activity through the control of interaction with CASP8. Phosphorylation at Thr-149 results in translocation to mitochondria and this translocation enables the binding to CASP8. Dephosphorylated at Thr-149 by calcineurin; doesn't inhibit the association between FADD and CASP8 and the consequent apoptosis. In terms of processing, polyubiquitinated by MDM2; promoting proteasomal-dependent degradation in response to apoptotic stimuli.

The protein resides in the cytoplasm. Its subcellular location is the mitochondrion. The protein localises to the sarcoplasmic reticulum. It is found in the membrane. In terms of biological role, apoptosis repressor that blocks multiple modes of cell death. Inhibits extrinsic apoptotic pathways through two different ways. Firstly by interacting with FAS and FADD upon FAS activation blocking death-inducing signaling complex (DISC) assembly. Secondly by interacting with CASP8 in a mitochondria localization- and phosphorylation-dependent manner, limiting the amount of soluble CASP8 available for DISC-mediated activation. Inhibits intrinsic apoptotic pathway in response to a wide range of stresses, through its interaction with BAX resulting in BAX inactivation, preventing mitochondrial dysfunction and release of pro-apoptotic factors. Inhibits calcium-mediated cell death by functioning as a cytosolic calcium buffer, dissociating its interaction with CASP8 and maintaining calcium homeostasis. Negatively regulates oxidative stress-induced apoptosis by phosphorylation-dependent suppression of the mitochondria-mediated intrinsic pathway, by blocking CASP2 activation and BAX translocation. Negatively regulates hypoxia-induced apoptosis in part by inhibiting the release of cytochrome c from mitochondria in a caspase-independent manner. Also inhibits TNF-induced necrosis by preventing TNF-signaling pathway through TNFRSF1A interaction abrogating the recruitment of RIPK1 to complex I. Finally through its role as apoptosis repressor, promotes vascular remodeling through inhibition of apoptosis and stimulation of proliferation, in response to hypoxia. Inhibits too myoblast differentiation through caspase inhibition. The sequence is that of Nucleolar protein 3 (Nol3) from Mus musculus (Mouse).